Reading from the N-terminus, the 65-residue chain is Large ribosomal subunit protein bL33 (65 aa).

The interval 17–40 (SRSVPSSEKRSAGVSRYTTEKNRR) is disordered.

This sequence belongs to the bacterial ribosomal protein bL33 family.

The protein is Large ribosomal subunit protein bL33 of Prochlorococcus marinus (strain NATL1A).